The sequence spans 97 residues: MVCVPCFIIPLLLYIWHKFVQPIILRYWNPWEKKDAQGNVIKKGPDFPFECKGGVCPFVPGAKKPEKASVGPAEESQNPPLNAIAAETEVDESKKEI.

Residues lysine 64–isoleucine 97 form a disordered region. Phosphoserine is present on serine 69.

It belongs to the UPF0729 family.

In Drosophila simulans (Fruit fly), this protein is UPF0729 protein GD16342.